Consider the following 298-residue polypeptide: Small ribosomal subunit protein uS2 (298 aa).

Residues 232–298 (ETFEGDDIPS…TAEAEEPAAE (67 aa)) form a disordered region. The span at 234–250 (FEGDDIPSAIDFEDETP) shows a compositional bias: acidic residues. Positions 251–276 (EPVAEVADAEVAAAEPVAEAAPTAEA) are enriched in low complexity.

The protein belongs to the universal ribosomal protein uS2 family.

This Acaryochloris marina (strain MBIC 11017) protein is Small ribosomal subunit protein uS2.